The primary structure comprises 846 residues: Choline trimethylamine-lyase (846 aa).

Positions Pro60–Arg718 constitute a PFL domain. Cys489 (cysteine radical intermediate) is an active-site residue. Catalysis depends on Glu491, which acts as the Proton acceptor. The Glycine radical domain occupies Asp725–Phe846. Gly821 carries the post-translational modification Glycine radical.

This sequence belongs to the glycyl radical enzyme (GRE) family. CutC subfamily. As to quaternary structure, homodimer. Requires the activating protein CutD to generate the key active site glycyl radical on Gly-821 that is involved in catalysis.

It catalyses the reaction choline = trimethylamine + acetaldehyde. The protein operates within amine and polyamine metabolism; choline degradation. Its function is as follows. Glycine radical enzyme that catalyzes the cleavage of a C-N bond in choline, producing trimethylamine (TMA) and acetaldehyde. Is involved in the anaerobic choline utilization pathway that allows D.alaskensis to grow on choline as a source of carbon and energy. Is strictly specific for choline as substrate. In Oleidesulfovibrio alaskensis (strain ATCC BAA-1058 / DSM 17464 / G20) (Desulfovibrio alaskensis), this protein is Choline trimethylamine-lyase.